Consider the following 393-residue polypeptide: tRNA(Met) cytidine acetate ligase (393 aa).

3 residues coordinate ATP: Gly81, Asn142, and Arg167.

Belongs to the TmcAL family.

The protein resides in the cytoplasm. It catalyses the reaction cytidine(34) in elongator tRNA(Met) + acetate + ATP = N(4)-acetylcytidine(34) in elongator tRNA(Met) + AMP + diphosphate. Catalyzes the formation of N(4)-acetylcytidine (ac(4)C) at the wobble position of elongator tRNA(Met), using acetate and ATP as substrates. First activates an acetate ion to form acetyladenylate (Ac-AMP) and then transfers the acetyl group to tRNA to form ac(4)C34. This is tRNA(Met) cytidine acetate ligase from Bacillus cereus (strain Q1).